Reading from the N-terminus, the 158-residue chain is MSRRRGKVEPRHIEGDPKYNDKVISKFINCLMVDGKKSVAEAVFYDALEVIAKKTGQDPYQVFQEALENAKPQVEVKSRRVGGVTLPQFQSKFVRERRLALGIRWLIRYSRDRNEKSMKNKLAAEFMEAQKGTGSAIKKKEDIRKMADANKAFSHYRW.

This sequence belongs to the universal ribosomal protein uS7 family. As to quaternary structure, part of the 30S ribosomal subunit. Contacts proteins S9 and S11.

One of the primary rRNA binding proteins, it binds directly to 16S rRNA where it nucleates assembly of the head domain of the 30S subunit. Is located at the subunit interface close to the decoding center, probably blocks exit of the E-site tRNA. In Leptospira biflexa, this protein is Small ribosomal subunit protein uS7.